The primary structure comprises 209 residues: Orotate phosphoribosyltransferase (209 aa).

Residues Arg96, Lys100, His102, and 122–130 each bind 5-phospho-alpha-D-ribose 1-diphosphate; that span reads EDLISTGGS. Residue Ser126 coordinates orotate.

Belongs to the purine/pyrimidine phosphoribosyltransferase family. PyrE subfamily. Homodimer. Mg(2+) serves as cofactor.

It catalyses the reaction orotidine 5'-phosphate + diphosphate = orotate + 5-phospho-alpha-D-ribose 1-diphosphate. It participates in pyrimidine metabolism; UMP biosynthesis via de novo pathway; UMP from orotate: step 1/2. Catalyzes the transfer of a ribosyl phosphate group from 5-phosphoribose 1-diphosphate to orotate, leading to the formation of orotidine monophosphate (OMP). The chain is Orotate phosphoribosyltransferase from Streptococcus pyogenes serotype M12 (strain MGAS2096).